We begin with the raw amino-acid sequence, 792 residues long: Serine/threonine-protein kinase Nek4 (792 aa).

Residues 6–261 (YCYMRVVGRG…VRSILRQPYI (256 aa)) enclose the Protein kinase domain. ATP is bound by residues 12 to 20 (VGRGSYGEV) and K35. The Proton acceptor role is filled by D131. Phosphothreonine; by autocatalysis is present on T165. Disordered regions lie at residues 329 to 358 (QEKP…NTGE), 379 to 515 (ANAG…LPSY), 527 to 611 (QQND…SITQ), and 628 to 657 (LSED…TNEM). S340 and S343 each carry phosphoserine. Polar residues-rich tracts occupy residues 412 to 421 (QGNTKSSDQP), 456 to 467 (DQVTGIIENQDS), 473 to 484 (QPHSSMSEPSLS), 496 to 505 (AHSGTKSQFQ), and 541 to 551 (VNSSRTSSTAS). Position 566 is an N6-methyllysine (K566). Residues 602–611 (RFSSDCSITQ) are compositionally biased toward polar residues. Positions 641 to 657 (DKSDGDSREGKSHTNEM) are enriched in basic and acidic residues. S675 carries the post-translational modification Phosphoserine.

This sequence belongs to the protein kinase superfamily. NEK Ser/Thr protein kinase family. NIMA subfamily. Requires Mn(2+) as cofactor. Expressed ubiquitously among various organs and is up-regulated in the testis.

Its subcellular location is the cytoplasm. It localises to the cell projection. The protein localises to the cilium. It carries out the reaction L-seryl-[protein] + ATP = O-phospho-L-seryl-[protein] + ADP + H(+). The catalysed reaction is L-threonyl-[protein] + ATP = O-phospho-L-threonyl-[protein] + ADP + H(+). Functionally, required for normal entry into proliferative arrest after a limited number of cell divisions, also called replicative senescence. Required for normal cell cycle arrest in response to double-stranded DNA damage. Protein kinase that seems to act exclusively upon threonine residues. In Mus musculus (Mouse), this protein is Serine/threonine-protein kinase Nek4 (Nek4).